A 130-amino-acid chain; its full sequence is Small ribosomal subunit protein uS8 (130 aa).

It belongs to the universal ribosomal protein uS8 family. As to quaternary structure, part of the 30S ribosomal subunit.

In terms of biological role, one of the primary rRNA binding proteins, it binds directly to 16S rRNA central domain where it helps coordinate assembly of the platform of the 30S subunit. The polypeptide is Small ribosomal subunit protein uS8 (Methanopyrus kandleri (strain AV19 / DSM 6324 / JCM 9639 / NBRC 100938)).